Here is a 230-residue protein sequence, read N- to C-terminus: Large ribosomal subunit protein uL1 (230 aa).

The protein belongs to the universal ribosomal protein uL1 family. In terms of assembly, part of the 50S ribosomal subunit.

Binds directly to 23S rRNA. The L1 stalk is quite mobile in the ribosome, and is involved in E site tRNA release. In terms of biological role, protein L1 is also a translational repressor protein, it controls the translation of the L11 operon by binding to its mRNA. The chain is Large ribosomal subunit protein uL1 from Staphylococcus aureus (strain N315).